A 3508-amino-acid chain; its full sequence is WD repeat and FYVE domain-containing protein 3 (3508 aa).

A phosphoserine mark is found at Ser-1942 and Ser-2277. Disordered stretches follow at residues Phe-2279–Pro-2303 and Ser-2441–Asp-2504. Positions Leu-2284–Arg-2963 are sufficient for translocalization to p62 bodies/ALIS. A compositionally biased stretch (basic and acidic residues) spans Glu-2450–Ala-2459. The residue at position 2474 (Ser-2474) is a Phosphoserine. Residues Glu-2513–Leu-2638 enclose the BEACH-type PH domain. Residues Met-2568–Cys-3508 are interaction with SQSTM1. The 294-residue stretch at Gly-2665 to Lys-2958 folds into the BEACH domain. Residues Arg-2963–Cys-3508 form an interaction with ATG5 region. 4 WD repeats span residues Ser-3059–Lys-3097, Gly-3107–Gln-3146, Gly-3149–Asn-3188, and Gly-3192–Thr-3236. A disordered region spans residues Ala-3254–Ser-3317. Over residues Gln-3261–Glu-3272 the composition is skewed to acidic residues. 2 positions are modified to phosphoserine: Ser-3317 and Ser-3321. Residues Asp-3326 to Val-3331 carry the LIR motif. The WD 5 repeat unit spans residues Thr-3390–Ala-3429. The FYVE-type zinc finger occupies Asp-3436–Gln-3496. Positions 3442, 3445, 3458, 3461, 3466, 3469, 3488, and 3491 each coordinate Zn(2+).

As to quaternary structure, directly interacts with ATG5 and associates with the ATG12-ATG5-ATG16L complex. Interacts with p62/SQSTM1. Directly interacts with GABARAP, GABARAPL1 and GABARAPL2; the interaction with GABARAP is required for WDFY3 recruitment to MAP1LC3B-positive p62/SQSTM1 bodies. Weakly interacts with MAP1LC3C; this interaction is direct. Does not interact with MAP1LC3A, nor MAP1LC3B. Interacts with TRAF6. In terms of tissue distribution, widely expressed, with high levels in the brain (at protein level). In the brain, expressed by both neuronal and non-neuronal cells. Expressed in bones, in the periosteum, cartilage, growth plate, trabeculae of the primary spongiosa, and scattered hematopoietic cells within the medullary cavity. Tends to be expressed at lower levels in the hypertrophic zone compared to trabeculae. Expressed in osteoblasts, osteoclasts and bone-marrow derived macrophages.

It is found in the nucleus. It localises to the cytoplasm. Its subcellular location is the cytosol. The protein localises to the PML body. The protein resides in the membrane. It is found in the perikaryon. It localises to the cell projection. Its subcellular location is the axon. Its function is as follows. Required for selective macroautophagy (aggrephagy). Acts as an adapter protein by linking specific proteins destined for degradation to the core autophagic machinery members, such as the ATG5-ATG12-ATG16L E3-like ligase, SQSTM1 and LC3. Involved in the formation and autophagic degradation of cytoplasmic ubiquitin-containing inclusions (p62 bodies, ALIS/aggresome-like induced structures). Important for normal brain development. Essential for the formation of axonal tracts throughout the brain and spinal cord, including the formation of the major forebrain commissures. Involved in the ability of neural cells to respond to guidance cues. Required for cortical neurons to respond to the trophic effects of netrin-1/NTN1. Regulates Wnt signaling through the removal of DVL3 aggregates, likely in an autophagy-dependent manner. This process may be important for the determination of brain size during embryonic development. May regulate osteoclastogenesis by acting on the TNFSF11/RANKL - TRAF6 pathway. After cytokinetic abscission, involved in midbody remnant degradation. In vitro strongly binds to phosphatidylinositol 3-phosphate (PtdIns3P). The polypeptide is WD repeat and FYVE domain-containing protein 3 (Wdfy3) (Mus musculus (Mouse)).